The primary structure comprises 98 residues: MLDRQQVQKIAHLARLDITSEEEEKFADQLSDILDYFEQLSELDTENVPPTTRAIELSNITRQDSFELYHDRDALLNEAPNPEGDFFRVPQILNTDEE.

Residues 77–98 (NEAPNPEGDFFRVPQILNTDEE) are disordered.

This sequence belongs to the GatC family. Heterotrimer of A, B and C subunits.

The catalysed reaction is L-glutamyl-tRNA(Gln) + L-glutamine + ATP + H2O = L-glutaminyl-tRNA(Gln) + L-glutamate + ADP + phosphate + H(+). It catalyses the reaction L-aspartyl-tRNA(Asn) + L-glutamine + ATP + H2O = L-asparaginyl-tRNA(Asn) + L-glutamate + ADP + phosphate + 2 H(+). Functionally, allows the formation of correctly charged Asn-tRNA(Asn) or Gln-tRNA(Gln) through the transamidation of misacylated Asp-tRNA(Asn) or Glu-tRNA(Gln) in organisms which lack either or both of asparaginyl-tRNA or glutaminyl-tRNA synthetases. The reaction takes place in the presence of glutamine and ATP through an activated phospho-Asp-tRNA(Asn) or phospho-Glu-tRNA(Gln). The chain is Aspartyl/glutamyl-tRNA(Asn/Gln) amidotransferase subunit C from Crocosphaera subtropica (strain ATCC 51142 / BH68) (Cyanothece sp. (strain ATCC 51142)).